Consider the following 296-residue polypeptide: Small ribosomal subunit protein uS2 (296 aa).

The segment at 252-296 (TSSKTVSKLKQSKKLSKTQNIDEETNTEFDQALGGACENNNSDNT) is disordered.

It belongs to the universal ribosomal protein uS2 family.

The sequence is that of Small ribosomal subunit protein uS2 (rpsB) from Rickettsia prowazekii (strain Madrid E).